Reading from the N-terminus, the 344-residue chain is Type II methyltransferase M.FnuDI (344 aa).

Residues 1-330 (MKLLSLFSGA…KRIKETLTDK (330 aa)) enclose the SAM-dependent MTase C5-type domain. Residue C71 is part of the active site.

The protein belongs to the class I-like SAM-binding methyltransferase superfamily. C5-methyltransferase family.

The enzyme catalyses a 2'-deoxycytidine in DNA + S-adenosyl-L-methionine = a 5-methyl-2'-deoxycytidine in DNA + S-adenosyl-L-homocysteine + H(+). Its function is as follows. A methylase, recognizes the double-stranded sequence 5'-GGCC-3', methylates C-? on both strands, and protects the DNA from cleavage by the FnuDI endonuclease. The protein is Type II methyltransferase M.FnuDI (fnuDIM) of Fusobacterium nucleatum.